Reading from the N-terminus, the 400-residue chain is Aspartate/prephenate aminotransferase (400 aa).

L-aspartate is bound by residues Gly39, Trp125, and Asn175. The residue at position 239 (Lys239) is an N6-(pyridoxal phosphate)lysine. Arg375 lines the L-aspartate pocket.

This sequence belongs to the class-I pyridoxal-phosphate-dependent aminotransferase family. Homodimer. Pyridoxal 5'-phosphate serves as cofactor.

The protein resides in the cytoplasm. It catalyses the reaction L-aspartate + 2-oxoglutarate = oxaloacetate + L-glutamate. The catalysed reaction is L-arogenate + 2-oxoglutarate = prephenate + L-glutamate. Catalyzes the reversible conversion of aspartate and 2-oxoglutarate to glutamate and oxaloacetate. Can also transaminate prephenate in the presence of glutamate. Required for symbiotic nitrogen fixation. This is Aspartate/prephenate aminotransferase from Rhizobium meliloti (strain 1021) (Ensifer meliloti).